Reading from the N-terminus, the 131-residue chain is Small ribosomal subunit protein uS8 (131 aa).

This sequence belongs to the universal ribosomal protein uS8 family. As to quaternary structure, part of the 30S ribosomal subunit. Contacts proteins S5 and S12.

One of the primary rRNA binding proteins, it binds directly to 16S rRNA central domain where it helps coordinate assembly of the platform of the 30S subunit. The protein is Small ribosomal subunit protein uS8 of Nitrosomonas eutropha (strain DSM 101675 / C91 / Nm57).